The following is a 253-amino-acid chain: Ubiquinone biosynthesis O-methyltransferase (253 aa).

Arg-47, Gly-78, Asp-99, and Met-141 together coordinate S-adenosyl-L-methionine.

This sequence belongs to the methyltransferase superfamily. UbiG/COQ3 family.

The enzyme catalyses a 3-demethylubiquinol + S-adenosyl-L-methionine = a ubiquinol + S-adenosyl-L-homocysteine + H(+). It catalyses the reaction a 3-(all-trans-polyprenyl)benzene-1,2-diol + S-adenosyl-L-methionine = a 2-methoxy-6-(all-trans-polyprenyl)phenol + S-adenosyl-L-homocysteine + H(+). The protein operates within cofactor biosynthesis; ubiquinone biosynthesis. In terms of biological role, O-methyltransferase that catalyzes the 2 O-methylation steps in the ubiquinone biosynthetic pathway. The chain is Ubiquinone biosynthesis O-methyltransferase from Bradyrhizobium sp. (strain ORS 278).